Consider the following 337-residue polypeptide: Visual pigment-like receptor peropsin (337 aa).

Residues 1–26 (MLRNNLGNSSDSKNEDGSVFSQTEHN) lie on the Extracellular side of the membrane. N8 carries an N-linked (GlcNAc...) asparagine glycan. The helical transmembrane segment at 27 to 49 (IVATYLIMAGMISIISNIIVLGI) threads the bilayer. The Cytoplasmic segment spans residues 50-61 (FIKYKELRTPTN). Residues 62-87 (AIIINLAVTDIGVSSIGYPMSAASDL) form a helical membrane-spanning segment. The Extracellular segment spans residues 88-101 (YGSWKFGYAGCQVY). A disulfide bridge connects residues C98 and C175. Residues 102–121 (AGLNIFFGMASIGLLTVVAV) form a helical membrane-spanning segment. Topologically, residues 122 to 140 (DRYLTICLPDVGRRMTTNT) are cytoplasmic. A helical transmembrane segment spans residues 141-164 (YIGLILGAWINGLFWALMPIIGWA). The Extracellular segment spans residues 165 to 188 (SYAPDPTGATCTINWRKNDRSFVS). Residues 189–212 (YTMTVIAINFIVPLTVMFYCYYHV) traverse the membrane as a helical segment. Residues 213–240 (TLSIKHHTTSDCTESLNRDWSDQIDVTK) are Cytoplasmic-facing. The helical transmembrane segment at 241 to 264 (MSVIMICMFLVAWSPYSIVCLWAS) threads the bilayer. Topologically, residues 265-272 (FGDPKKIP) are extracellular. A helical transmembrane segment spans residues 273–297 (PPMAIIAPLFAKSSTFYNPCIYVVA). K284 is subject to N6-(retinylidene)lysine. Residues 298–337 (NKKFRRAMLAMFKCQTHQTMPVTSILPMDVSQNPLASGRI) are Cytoplasmic-facing.

It belongs to the G-protein coupled receptor 1 family. Opsin subfamily. Found only in the eye, where it is localized to the retinal pigment epithelium (RPE). In the RPE, it is localized to the microvilli that surround the photoreceptor outer segments.

The protein resides in the membrane. Its function is as follows. May play a role in rpe physiology either by detecting light directly or by monitoring the concentration of retinoids or other photoreceptor-derived compounds. The sequence is that of Visual pigment-like receptor peropsin (RRH) from Homo sapiens (Human).